The following is a 275-amino-acid chain: Adenylate kinase 2 (275 aa).

A lipid anchor (N-myristoyl glycine) is attached at Gly-2. The required for cell membrane translocation but dispensable for cell membrane localization stretch occupies residues 21 to 30; it reads KKKEKKKKKK. Residue 39-44 participates in ATP binding; it reads GSGKDT. The NMP stretch occupies residues 59–97; the sequence is CISKLLKEYKEEYNKENVLNEEENYFDEIEKCMIDGSLV. AMP is bound by residues 95–97, 126–129, and Gln-133; these read SLV and GFPR. Arg-164 contributes to the ATP binding site. Positions 165 to 214 are LID; sequence IIDPITNISYNENIIQIIKKKREGQELSDKEQKQLIIDNHLYNNLSNDIL. AMP is bound by residues Arg-220 and Arg-231.

The protein belongs to the adenylate kinase family. As to quaternary structure, monomer. Oligomer. Heterodimer composed of NMT and AK2; AK2 myristoylation stabilizes the complex. Myristoylation is required for cell membrane localization. In terms of processing, may be palmitoylated at Cys-4 which stabilizes cell membrane localization of the myristoylated protein.

Its subcellular location is the parasitophorous vacuole membrane. It catalyses the reaction AMP + ATP = 2 ADP. In terms of biological role, catalyzes the reversible transfer of the terminal phosphate group between ATP and AMP. Has very low activity with CTP, GTP, ITP and UTP and no activity with GMP, UMP or IMP in vitro. This is Adenylate kinase 2 from Plasmodium falciparum (isolate 3D7).